The following is a 345-amino-acid chain: Dihydroorotate dehydrogenase (quinone) (345 aa).

FMN-binding positions include 65–69 (AGLDK) and Thr89. Residue Lys69 participates in substrate binding. 114 to 118 (NRMGF) is a substrate binding site. FMN contacts are provided by Asn142 and Asn175. A substrate-binding site is contributed by Asn175. The Nucleophile role is filled by Ser178. Substrate is bound at residue Asn180. Positions 220 and 248 each coordinate FMN. Residue 249–250 (NT) participates in substrate binding. Residues Gly271, Gly300, and 321-322 (YT) each bind FMN.

The protein belongs to the dihydroorotate dehydrogenase family. Type 2 subfamily. In terms of assembly, monomer. It depends on FMN as a cofactor.

It is found in the cell membrane. It catalyses the reaction (S)-dihydroorotate + a quinone = orotate + a quinol. Its pathway is pyrimidine metabolism; UMP biosynthesis via de novo pathway; orotate from (S)-dihydroorotate (quinone route): step 1/1. Its function is as follows. Catalyzes the conversion of dihydroorotate to orotate with quinone as electron acceptor. This chain is Dihydroorotate dehydrogenase (quinone), found in Burkholderia thailandensis (strain ATCC 700388 / DSM 13276 / CCUG 48851 / CIP 106301 / E264).